A 195-amino-acid polypeptide reads, in one-letter code: 3-isopropylmalate dehydratase small subunit (195 aa).

It belongs to the LeuD family. LeuD type 1 subfamily. As to quaternary structure, heterodimer of LeuC and LeuD.

The enzyme catalyses (2R,3S)-3-isopropylmalate = (2S)-2-isopropylmalate. It participates in amino-acid biosynthesis; L-leucine biosynthesis; L-leucine from 3-methyl-2-oxobutanoate: step 2/4. Functionally, catalyzes the isomerization between 2-isopropylmalate and 3-isopropylmalate, via the formation of 2-isopropylmaleate. In Karelsulcia muelleri (strain GWSS) (Sulcia muelleri), this protein is 3-isopropylmalate dehydratase small subunit.